Here is a 134-residue protein sequence, read N- to C-terminus: Phosphoribosyl-ATP pyrophosphatase (134 aa).

It belongs to the PRA-PH family.

The protein localises to the cytoplasm. It carries out the reaction 1-(5-phospho-beta-D-ribosyl)-ATP + H2O = 1-(5-phospho-beta-D-ribosyl)-5'-AMP + diphosphate + H(+). Its pathway is amino-acid biosynthesis; L-histidine biosynthesis; L-histidine from 5-phospho-alpha-D-ribose 1-diphosphate: step 2/9. The sequence is that of Phosphoribosyl-ATP pyrophosphatase from Verminephrobacter eiseniae (strain EF01-2).